The following is a 408-amino-acid chain: Succinylornithine transaminase (408 aa).

The residue at position 252 (Lys-252) is an N6-(pyridoxal phosphate)lysine.

Belongs to the class-III pyridoxal-phosphate-dependent aminotransferase family. AstC subfamily. Pyridoxal 5'-phosphate serves as cofactor.

The enzyme catalyses N(2)-succinyl-L-ornithine + 2-oxoglutarate = N-succinyl-L-glutamate 5-semialdehyde + L-glutamate. It participates in amino-acid degradation; L-arginine degradation via AST pathway; L-glutamate and succinate from L-arginine: step 3/5. Catalyzes the transamination of N(2)-succinylornithine and alpha-ketoglutarate into N(2)-succinylglutamate semialdehyde and glutamate. Can also act as an acetylornithine aminotransferase. The protein is Succinylornithine transaminase of Salmonella typhi.